The following is a 31-amino-acid chain: Glucagon-5 (31 aa).

The protein belongs to the glucagon family.

It is found in the secreted. Functionally, glucagon plays a key role in glucose metabolism and homeostasis. Regulates blood glucose by increasing gluconeogenesis and decreasing glycolysis. The protein is Glucagon-5 of Huso dauricus (Kaluga sturgeon).